Here is a 224-residue protein sequence, read N- to C-terminus: Enolase-phosphatase E1 (224 aa).

This sequence belongs to the HAD-like hydrolase superfamily. MasA/MtnC family. Monomer. Mg(2+) is required as a cofactor.

The enzyme catalyses 5-methylsulfanyl-2,3-dioxopentyl phosphate + H2O = 1,2-dihydroxy-5-(methylsulfanyl)pent-1-en-3-one + phosphate. It functions in the pathway amino-acid biosynthesis; L-methionine biosynthesis via salvage pathway; L-methionine from S-methyl-5-thio-alpha-D-ribose 1-phosphate: step 3/6. Its pathway is amino-acid biosynthesis; L-methionine biosynthesis via salvage pathway; L-methionine from S-methyl-5-thio-alpha-D-ribose 1-phosphate: step 4/6. Functionally, bifunctional enzyme that catalyzes the enolization of 2,3-diketo-5-methylthiopentyl-1-phosphate (DK-MTP-1-P) into the intermediate 2-hydroxy-3-keto-5-methylthiopentenyl-1-phosphate (HK-MTPenyl-1-P), which is then dephosphorylated to form the acireductone 1,2-dihydroxy-3-keto-5-methylthiopentene (DHK-MTPene). This is Enolase-phosphatase E1 from Thioalkalivibrio sulfidiphilus (strain HL-EbGR7).